Here is a 169-residue protein sequence, read N- to C-terminus: Peptide deformylase (169 aa).

2 residues coordinate Fe cation: Cys91 and His133. Glu134 is an active-site residue. A Fe cation-binding site is contributed by His137.

The protein belongs to the polypeptide deformylase family. The cofactor is Fe(2+).

The catalysed reaction is N-terminal N-formyl-L-methionyl-[peptide] + H2O = N-terminal L-methionyl-[peptide] + formate. In terms of biological role, removes the formyl group from the N-terminal Met of newly synthesized proteins. Requires at least a dipeptide for an efficient rate of reaction. N-terminal L-methionine is a prerequisite for activity but the enzyme has broad specificity at other positions. The sequence is that of Peptide deformylase from Enterobacter sp. (strain 638).